A 93-amino-acid chain; its full sequence is Parbolysin P1 (93 aa).

3 disulfide bridges follow: Cys16-Cys37, Cys22-Cys33, and Cys47-Cys60.

It belongs to the worm cytolysin family. Localized within the skin and proboscis and are most readily isolated from body mucus secretions.

It localises to the secreted. In terms of biological role, cytolysin that shows hemolytic activity (on bovine erythrocytes, HC(50)=5.75 mg/ml). This hemolytic activity is completely inhibited by small unilamelar vesicles composed of PC/PG, PC/PI and PC/PS in 1:1 molar ratios (with at least 100 mg/ml concentration). The recombinant protein does not show hemolytic activity, suggesting that it is not properly folded or that it requires a free N-terminal end for its activity. The protein is Parbolysin P1 of Parborlasia corrugatus (Antarctic nemertean worm).